We begin with the raw amino-acid sequence, 976 residues long: MEEFENFFSQLIPAPDQDIWLLAAQQTPQNNDGVSTSGIPIGWSLQNLAASTNNIAAIDSNPQIREQLQQLQQQQQQQQTQIQQQLQSYQQQQQQHYQQRQQQYQQQYQQPYTTPSPPDQIDYNQQLSPQQQQQQQQQQQQQQQQQQQQPQLQQQNNTISQQQQQQNLNFQVQFLQQQQQHQQQLQQQQEQFQHQQLQHQQQQYFIKQQLQQQQQQQQQQQQQQQQQQQQQQQQQQQQQQQQQQQNQHLSPILSPLPPIQQLQQYQQQQQQQQQQQQQQQQQQQQQQPQQQSINIGSSNTPLQHQAMLQAQSLMDSINTKQPPIPPTLQSPTQHQFLNTPVLDQHILSSIRPSYSQVTKANISTLPTEITNSLTNFNGTNNSTPNFEDLTGGKLSSNNIKNTATPLSSPPSTKNGKQKQPKNNNNNNNSSNNNNNNNQTTTQQKQSKNNNSYGNNSNNNNNNNNFNNNKLKKQNDSTTTPTITSPNMTSPIDSNGDFDLLDEDEKKKSISRINQNLASRNYRQRRKEYIKEIESKMAALTFENHQLKKENESLKETGGVEVMRPEPELITMVVEGKQIIIQLSQALKKNDDRSLIYLLHLYHCAIAKRYSIVEREVEKIVHPYTQSKLAAMGYIPKSDKMFLNCIAGPAADSWFQLFKNEAEITLEQSNKLEALRTQHGKIDSALLQERQELDLDIKKFYYTKILVLPNNPLIIGDIPAQPYNGELSQSPISNSPLEISQLLDFAGKLESLKKNFILHRNLMLDTLASLSSILTPRQEAMLLVRVHFYTSYDFSHMELLKDVWTNIVSSKSITGPLNISEALKKLSDTTNTHHSIENIVKPPQFHQYTPKQLKFENQSNNFGNNNGSKSKNIENNLNNSVNNNNNNNNNNNNNNNNNNNNNNNNNNNNNNNNNSNSNNNNNVNSNSSNVNSNNNNFNNAPQMVLNPPSADAIPYPSTTQLDKRFQWVSYPSAPPPN.

2 coiled-coil regions span residues 57–110 (AIDS…QYQQ) and 136–287 (QQQQ…QQQQ). Residues 104–128 (YQQQYQQPYTTPSPPDQIDYNQQLS) are disordered. 2 stretches are compositionally biased toward polar residues: residues 374–385 (TNFNGTNNSTPN) and 393–411 (KLSSNNIKNTATPLSSPPS). The disordered stretch occupies residues 374-499 (TNFNGTNNST…PIDSNGDFDL (126 aa)). Composition is skewed to low complexity over residues 420–468 (PKNN…FNNN) and 476–490 (STTTPTITSPNMTSP). Residues 504 to 567 (EKKKSISRIN…GVEVMRPEPE (64 aa)) form the bZIP domain. The interval 505-507 (KKK) is basic motif. The interval 509–516 (ISRINQNL) is leucine-zipper. A compositionally biased stretch (low complexity) spans 855-938 (ENQSNNFGNN…VNSNNNNFNN (84 aa)). The disordered stretch occupies residues 855-957 (ENQSNNFGNN…SADAIPYPST (103 aa)).

This sequence belongs to the bZIP family.

It localises to the nucleus. Its function is as follows. Probable transcriptional regulator. This chain is Probable basic-leucine zipper transcription factor Q (bzpQ), found in Dictyostelium discoideum (Social amoeba).